A 120-amino-acid polypeptide reads, in one-letter code: Large ribosomal subunit protein eL18 (120 aa).

It belongs to the eukaryotic ribosomal protein eL18 family.

The sequence is that of Large ribosomal subunit protein eL18 from Pyrococcus horikoshii (strain ATCC 700860 / DSM 12428 / JCM 9974 / NBRC 100139 / OT-3).